Consider the following 377-residue polypeptide: Phosphoserine aminotransferase (377 aa).

R43 serves as a coordination point for L-glutamate. Pyridoxal 5'-phosphate-binding residues include W105, T164, D189, and Q212. K213 carries the N6-(pyridoxal phosphate)lysine modification. 254–255 (NT) serves as a coordination point for pyridoxal 5'-phosphate.

It belongs to the class-V pyridoxal-phosphate-dependent aminotransferase family. SerC subfamily. In terms of assembly, homodimer. Requires pyridoxal 5'-phosphate as cofactor.

The protein resides in the cytoplasm. It catalyses the reaction O-phospho-L-serine + 2-oxoglutarate = 3-phosphooxypyruvate + L-glutamate. It carries out the reaction 4-(phosphooxy)-L-threonine + 2-oxoglutarate = (R)-3-hydroxy-2-oxo-4-phosphooxybutanoate + L-glutamate. Its pathway is amino-acid biosynthesis; L-serine biosynthesis; L-serine from 3-phospho-D-glycerate: step 2/3. It participates in cofactor biosynthesis; pyridoxine 5'-phosphate biosynthesis; pyridoxine 5'-phosphate from D-erythrose 4-phosphate: step 3/5. Its function is as follows. Catalyzes the reversible conversion of 3-phosphohydroxypyruvate to phosphoserine and of 3-hydroxy-2-oxo-4-phosphonooxybutanoate to phosphohydroxythreonine. The sequence is that of Phosphoserine aminotransferase from Bordetella bronchiseptica (strain ATCC BAA-588 / NCTC 13252 / RB50) (Alcaligenes bronchisepticus).